The following is a 570-amino-acid chain: Methionine--tRNA ligase (570 aa).

Positions 11 to 21 (PYVQTVPHLGN) match the 'HIGH' region motif. Zn(2+) is bound by residues Cys143, Cys146, Cys156, and Cys159. A 'KMSKS' region motif is present at residues 333-337 (KFSKS). ATP is bound at residue Lys336.

Belongs to the class-I aminoacyl-tRNA synthetase family. MetG type 1 subfamily. The cofactor is Zn(2+).

Its subcellular location is the cytoplasm. The enzyme catalyses tRNA(Met) + L-methionine + ATP = L-methionyl-tRNA(Met) + AMP + diphosphate. In terms of biological role, is required not only for elongation of protein synthesis but also for the initiation of all mRNA translation through initiator tRNA(fMet) aminoacylation. The polypeptide is Methionine--tRNA ligase (Pyrobaculum calidifontis (strain DSM 21063 / JCM 11548 / VA1)).